Here is a 195-residue protein sequence, read N- to C-terminus: dTTP/UTP pyrophosphatase (195 aa).

D70 acts as the Proton acceptor in catalysis.

Belongs to the Maf family. YhdE subfamily. It depends on a divalent metal cation as a cofactor.

Its subcellular location is the cytoplasm. The catalysed reaction is dTTP + H2O = dTMP + diphosphate + H(+). The enzyme catalyses UTP + H2O = UMP + diphosphate + H(+). In terms of biological role, nucleoside triphosphate pyrophosphatase that hydrolyzes dTTP and UTP. May have a dual role in cell division arrest and in preventing the incorporation of modified nucleotides into cellular nucleic acids. In Methanococcoides burtonii (strain DSM 6242 / NBRC 107633 / OCM 468 / ACE-M), this protein is dTTP/UTP pyrophosphatase.